The sequence spans 379 residues: Putative cysteine desulfurase IscS 1 (379 aa).

Residues 71-72, asparagine 151, glutamine 179, and 199-201 contribute to the pyridoxal 5'-phosphate site; these read GT and SGH. Lysine 202 is modified (N6-(pyridoxal phosphate)lysine). Position 237 (threonine 237) interacts with pyridoxal 5'-phosphate. Catalysis depends on cysteine 325, which acts as the Cysteine persulfide intermediate. Residue cysteine 325 participates in [2Fe-2S] cluster binding.

This sequence belongs to the class-V pyridoxal-phosphate-dependent aminotransferase family. NifS/IscS subfamily. It depends on pyridoxal 5'-phosphate as a cofactor.

The catalysed reaction is (sulfur carrier)-H + L-cysteine = (sulfur carrier)-SH + L-alanine. Functionally, catalyzes the removal of elemental sulfur from cysteine to produce alanine. The protein is Putative cysteine desulfurase IscS 1 (iscS1) of Bacillus subtilis (strain 168).